The chain runs to 198 residues: Superoxide dismutase [Mn], mitochondrial (198 aa).

A Mn(2+)-binding site is contributed by His26. The residue at position 34 (Tyr34) is a 3'-nitrotyrosine. Lys44 and Lys51 each carry N6-acetyllysine; alternate. N6-succinyllysine; alternate is present on residues Lys44 and Lys51. Mn(2+) is bound at residue His74. Residue Lys90 is modified to N6-acetyllysine. N6-acetyllysine; alternate occurs at positions 98 and 106. N6-succinyllysine; alternate is present on residues Lys98 and Lys106. Residues Asp159 and His163 each coordinate Mn(2+). At Lys178 the chain carries N6-acetyllysine.

This sequence belongs to the iron/manganese superoxide dismutase family. In terms of assembly, homotetramer. Mn(2+) is required as a cofactor. Post-translationally, nitrated under oxidative stress. Nitration coupled with oxidation inhibits the catalytic activity. In terms of processing, acetylation at Lys-98 decreases enzymatic activity. Deacetylated by SIRT3 upon exposure to ionizing radiations or after long fasting. Polyubiquitinated; leading to proteasomal degradation. Deubiquitinated by USP36 which increases protein stability.

Its subcellular location is the mitochondrion matrix. It catalyses the reaction 2 superoxide + 2 H(+) = H2O2 + O2. Functionally, destroys superoxide anion radicals which are normally produced within the cells and which are toxic to biological systems. The sequence is that of Superoxide dismutase [Mn], mitochondrial (SOD2) from Macaca fuscata fuscata (Japanese macaque).